The primary structure comprises 388 residues: Endoglucanase 3 (388 aa).

The N-terminal stretch at 1 to 16 is a signal peptide; sequence MKHSVLAGLFATGALA. A CBM1 domain is found at 17–52; it reads QGGAWQQCGGVGFSGSTSCVSGYTCVYLNDWYSQCQ. 2 cysteine pairs are disulfide-bonded: Cys-24–Cys-41 and Cys-35–Cys-51. Residues 53–91 form a linker region; that stretch reads PQPTTLRTTTTPGATSTTRSAPAATSTTPAKGKFKWFGI. The segment at 56 to 81 is disordered; the sequence is TTLRTTTTPGATSTTRSAPAATSTTP. N-linked (GlcNAc...) asparagine glycosylation is found at Asn-92 and Asn-155. The segment at 92 to 388 is catalytic; it reads NQSCAEFGKG…YNSLLKKYVP (297 aa). The active-site Proton donor is Glu-215. Asn-259 is a glycosylation site (N-linked (GlcNAc...) asparagine). Catalysis depends on Glu-322, which acts as the Nucleophile.

The protein belongs to the glycosyl hydrolase 5 (cellulase A) family.

It catalyses the reaction Endohydrolysis of (1-&gt;4)-beta-D-glucosidic linkages in cellulose, lichenin and cereal beta-D-glucans.. This chain is Endoglucanase 3 (CMC3), found in Humicola insolens (Soft-rot fungus).